A 106-amino-acid chain; its full sequence is Urease subunit beta (106 aa).

The protein belongs to the urease beta subunit family. Heterotrimer of UreA (gamma), UreB (beta) and UreC (alpha) subunits. Three heterotrimers associate to form the active enzyme.

It localises to the cytoplasm. It catalyses the reaction urea + 2 H2O + H(+) = hydrogencarbonate + 2 NH4(+). Its pathway is nitrogen metabolism; urea degradation; CO(2) and NH(3) from urea (urease route): step 1/1. This chain is Urease subunit beta, found in Escherichia coli O157:H7.